A 190-amino-acid polypeptide reads, in one-letter code: Elongation factor P (190 aa).

The protein belongs to the elongation factor P family.

Its subcellular location is the cytoplasm. It functions in the pathway protein biosynthesis; polypeptide chain elongation. Its function is as follows. Involved in peptide bond synthesis. Stimulates efficient translation and peptide-bond synthesis on native or reconstituted 70S ribosomes in vitro. Probably functions indirectly by altering the affinity of the ribosome for aminoacyl-tRNA, thus increasing their reactivity as acceptors for peptidyl transferase. The sequence is that of Elongation factor P (efp) from Mycoplasma genitalium (strain ATCC 33530 / DSM 19775 / NCTC 10195 / G37) (Mycoplasmoides genitalium).